The following is a 331-amino-acid chain: Protein mono-ADP-ribosyltransferase PARP11 (331 aa).

Residue lysine 11 is modified to N6-(ADP-ribosyl)lysine. The WWE domain occupies 15–99; the sequence is SDVDDMDTSD…VTGKQRLIKR (85 aa). ADP-ribosylcysteine is present on residues cysteine 49 and cysteine 65. ADP-ribosyl aspartic acid is present on aspartate 80. Residues 116–331 enclose the PARP catalytic domain; that stretch reads IPMPTHWENV…IYPEYLIDFH (216 aa).

This sequence belongs to the ARTD/PARP family. Auto-mono-ADP-ribosylated. As to expression, predominantly expressed in testis, preferentially in postmeiotic germ cells. Also detectable in other tissues, including liver, lung, spleen, thymus and brain.

The protein localises to the nucleus. Its subcellular location is the nuclear pore complex. The catalysed reaction is L-aspartyl-[protein] + NAD(+) = 4-O-(ADP-D-ribosyl)-L-aspartyl-[protein] + nicotinamide. The enzyme catalyses L-cysteinyl-[protein] + NAD(+) = S-(ADP-D-ribosyl)-L-cysteinyl-[protein] + nicotinamide + H(+). It carries out the reaction L-glutamyl-[protein] + NAD(+) = 5-O-(ADP-D-ribosyl)-L-glutamyl-[protein] + nicotinamide. It catalyses the reaction L-lysyl-[protein] + NAD(+) = N(6)-(ADP-D-ribosyl)-L-lysyl-[protein] + nicotinamide + H(+). Its function is as follows. Mono-ADP-ribosyltransferase that mediates mono-ADP-ribosylation of target proteins. Plays a role in nuclear envelope stability and nuclear remodeling during spermiogenesis. Inhibits the type I interferon activated signaling pathway. Mechanistically, mono-ADP-ribosylates beta-TrCP/BTRC to promote IFNAR1 ubiquitination and protect BTRC from ubiquitin-proteasome degradation. The chain is Protein mono-ADP-ribosyltransferase PARP11 from Mus musculus (Mouse).